The following is a 286-amino-acid chain: L-ribulose 3-epimerase (286 aa).

4 residues coordinate D-allulose: H12, S69, E152, and E158. H12, S69, E152, and E158 together coordinate D-fructose. The Proton donor/acceptor role is filled by E152. E152 lines the Mn(2+) pocket. D185 lines the Mn(2+) pocket. D-allulose contacts are provided by H188, H211, R217, and E246. H188, H211, R217, and E246 together coordinate D-fructose. H211 is a binding site for Mn(2+). The active-site Proton donor/acceptor is the E246. Mn(2+) is bound at residue E246.

Belongs to the hyi family. As to quaternary structure, homodimer. Requires Mn(2+) as cofactor.

The enzyme catalyses L-ribulose = L-xylulose. It carries out the reaction D-ribulose = D-xylulose. It catalyses the reaction D-allulose = keto-D-fructose. The catalysed reaction is keto-L-tagatose = keto-L-sorbose. The enzyme catalyses keto-D-tagatose = keto-D-sorbose. Functionally, catalyzes the epimerization of various ketoses at the C(3) position. Exhibits the highest enzymatic activity toward L-ribulose, followed by D-ribulose, D-allulose and D-fructose. Shows lower activity with L-xylulose, L-tagatose, D-xylulose, D-tagatose, L-sorbose, D-sorbose, and weak activity with L-allulose and L-fructose. This chain is L-ribulose 3-epimerase, found in Methylomonas sp. (strain DH-1).